The following is a 1178-amino-acid chain: Pyruvate carboxylase, mitochondrial (1178 aa).

A mitochondrion-targeting transit peptide spans 1 to 20 (MLKFQTVRGGLRLLGVRRSS). 2 positions are modified to N6-acetyllysine: K35 and K39. A Biotin carboxylation domain is found at 36-486 (PIKKVMVANR…DTQFIDENPE (451 aa)). K79 carries the N6-acetyllysine; alternate modification. The residue at position 79 (K79) is an N6-succinyllysine; alternate. K148 and K152 each carry N6-acetyllysine. Positions 152 and 236 each coordinate ATP. In terms of domain architecture, ATP-grasp spans 156 to 353 (RAIAIAAGVP…LVHAQIHVSE (198 aa)). K241 is subject to N6-acetyllysine. ATP is bound at residue H271. Residues K297, K316, and K319 each carry the N6-acetyllysine modification. R328 is an active-site residue. K434 is modified (N6-acetyllysine). K442 carries the N6-succinyllysine modification. In terms of domain architecture, Pyruvate carboxyltransferase spans 563–832 (LLLMDTTFRD…DTEVPLERVF (270 aa)). Substrate is bound at residue 571–575 (RDAHQ). A Mn(2+)-binding site is contributed by D572. K589 bears the N6-acetyllysine mark. R644 provides a ligand contact to substrate. 2 positions are modified to N6-acetyllysine: K661 and K717. Residue K741 participates in Mn(2+) binding. K741 is subject to N6-carboxylysine. At K748 the chain carries N6-acetyllysine. Mn(2+) is bound by residues H771 and H773. K892 is modified (N6-acetyllysine). T908 contributes to the substrate binding site. At K969 the chain carries N6-acetyllysine. K988 is subject to N6-acetyllysine; alternate. N6-succinyllysine; alternate is present on K988. At K992 the chain carries N6-acetyllysine. Position 1003 is a phosphothreonine (T1003). Residues K1061, K1090, and K1124 each carry the N6-acetyllysine modification. Residues 1109–1178 (KGQIGAPMPG…EGDDLILEIE (70 aa)) enclose the Biotinyl-binding domain. At K1144 the chain carries N6-biotinyllysine.

As to quaternary structure, homotetramer. Interacts (via the biotin carboxylation domain) with SIRT4. The cofactor is biotin. Requires Mn(2+) as cofactor. In terms of processing, acetylation of Lys-748 might play a role in catalytic activity regulation.

It localises to the mitochondrion matrix. It catalyses the reaction hydrogencarbonate + pyruvate + ATP = oxaloacetate + ADP + phosphate + H(+). The protein operates within carbohydrate biosynthesis; gluconeogenesis. Its function is as follows. Pyruvate carboxylase catalyzes a 2-step reaction, involving the ATP-dependent carboxylation of the covalently attached biotin in the first step and the transfer of the carboxyl group to pyruvate in the second. Catalyzes in a tissue specific manner, the initial reactions of glucose (liver, kidney) and lipid (adipose tissue, liver, brain) synthesis from pyruvate. The chain is Pyruvate carboxylase, mitochondrial (Pc) from Rattus norvegicus (Rat).